A 459-amino-acid polypeptide reads, in one-letter code: MLKIFNTLTREKEVFKPISENKVGMYVCGVTVYDLCHIGHGRTFVCFDVIARYLRYLGYELTYVRNITDVDDKIIRRALENKETCEQLVDRMVVEMYKDFDALNVLRPDFEPRATHHIAEIIALVEKLIARGHAYVADNGDVMFDVESFKEYGKLSRQDLTQLQAGARVEISEIKKNPMDFVLWKMSKENEPSWNSPWGAGRPGWHIECSAMNCKHLGEHFDIHGGGADLMFPHHENEIAQSCCAHGNRYVNYWIHSGMIMVDKEKMSKSLGNFFTIRDVLNHYDAESVRYFLLTAHYRSQLNYSEENLDLAHGALERLYTALRGTDKSAVSFGGENFIAQFTEAMNDDFNTPNAISVLFEMAREINRLKNEDKLLADGLAARLRELASILGLLDQDPEDFLQAGSDDAEIAKIEELIKQRNDARQAKDWARADAARNELTTMGVILEDSSNGTMWRKM.

Residue Cys28 participates in Zn(2+) binding. The 'HIGH' region motif lies at 30-40 (VTVYDLCHIGH). Residues Cys209, His234, and Glu238 each coordinate Zn(2+). A 'KMSKS' region motif is present at residues 266–270 (KMSKS). Lys269 provides a ligand contact to ATP.

It belongs to the class-I aminoacyl-tRNA synthetase family. As to quaternary structure, monomer. Zn(2+) is required as a cofactor.

Its subcellular location is the cytoplasm. The enzyme catalyses tRNA(Cys) + L-cysteine + ATP = L-cysteinyl-tRNA(Cys) + AMP + diphosphate. The sequence is that of Cysteine--tRNA ligase from Histophilus somni (strain 2336) (Haemophilus somnus).